The primary structure comprises 471 residues: Sulfate adenylyltransferase subunit 1 (471 aa).

The tr-type G domain occupies 24-240 (KSLLRFLTCG…ESADVERELE (217 aa)). Residues 33 to 40 (GSVDDGKS) form a G1 region. Residue 33–40 (GSVDDGKS) participates in GTP binding. The interval 91–95 (GITID) is G2. Residues 112 to 115 (DTPG) form a G3 region. GTP is bound by residues 112-116 (DTPGH) and 167-170 (NKMD). The segment at 167–170 (NKMD) is G4. The segment at 204 to 206 (SAL) is G5.

It belongs to the TRAFAC class translation factor GTPase superfamily. Classic translation factor GTPase family. CysN/NodQ subfamily. Heterodimer composed of CysD, the smaller subunit, and CysN.

The catalysed reaction is sulfate + ATP + H(+) = adenosine 5'-phosphosulfate + diphosphate. The protein operates within sulfur metabolism; hydrogen sulfide biosynthesis; sulfite from sulfate: step 1/3. Its function is as follows. With CysD forms the ATP sulfurylase (ATPS) that catalyzes the adenylation of sulfate producing adenosine 5'-phosphosulfate (APS) and diphosphate, the first enzymatic step in sulfur assimilation pathway. APS synthesis involves the formation of a high-energy phosphoric-sulfuric acid anhydride bond driven by GTP hydrolysis by CysN coupled to ATP hydrolysis by CysD. The protein is Sulfate adenylyltransferase subunit 1 of Aeromonas salmonicida (strain A449).